We begin with the raw amino-acid sequence, 150 residues long: D-aminoacyl-tRNA deacylase (150 aa).

Residues 138 to 139 (GP) carry the Gly-cisPro motif, important for rejection of L-amino acids motif.

It belongs to the DTD family. In terms of assembly, homodimer.

Its subcellular location is the cytoplasm. It catalyses the reaction glycyl-tRNA(Ala) + H2O = tRNA(Ala) + glycine + H(+). The enzyme catalyses a D-aminoacyl-tRNA + H2O = a tRNA + a D-alpha-amino acid + H(+). Its function is as follows. An aminoacyl-tRNA editing enzyme that deacylates mischarged D-aminoacyl-tRNAs. Also deacylates mischarged glycyl-tRNA(Ala), protecting cells against glycine mischarging by AlaRS. Acts via tRNA-based rather than protein-based catalysis; rejects L-amino acids rather than detecting D-amino acids in the active site. By recycling D-aminoacyl-tRNA to D-amino acids and free tRNA molecules, this enzyme counteracts the toxicity associated with the formation of D-aminoacyl-tRNA entities in vivo and helps enforce protein L-homochirality. This chain is D-aminoacyl-tRNA deacylase, found in Salinibacter ruber (strain DSM 13855 / M31).